We begin with the raw amino-acid sequence, 261 residues long: UPF0328 protein ECU06_0100 (261 aa).

The protein belongs to the UPF0328 family.

The protein is UPF0328 protein ECU06_0100 of Encephalitozoon cuniculi (strain GB-M1) (Microsporidian parasite).